The primary structure comprises 95 residues: Aspartyl/glutamyl-tRNA(Asn/Gln) amidotransferase subunit C (95 aa).

It belongs to the GatC family. Heterotrimer of A, B and C subunits.

The enzyme catalyses L-glutamyl-tRNA(Gln) + L-glutamine + ATP + H2O = L-glutaminyl-tRNA(Gln) + L-glutamate + ADP + phosphate + H(+). It catalyses the reaction L-aspartyl-tRNA(Asn) + L-glutamine + ATP + H2O = L-asparaginyl-tRNA(Asn) + L-glutamate + ADP + phosphate + 2 H(+). Functionally, allows the formation of correctly charged Asn-tRNA(Asn) or Gln-tRNA(Gln) through the transamidation of misacylated Asp-tRNA(Asn) or Glu-tRNA(Gln) in organisms which lack either or both of asparaginyl-tRNA or glutaminyl-tRNA synthetases. The reaction takes place in the presence of glutamine and ATP through an activated phospho-Asp-tRNA(Asn) or phospho-Glu-tRNA(Gln). The protein is Aspartyl/glutamyl-tRNA(Asn/Gln) amidotransferase subunit C of Chlorobaculum parvum (strain DSM 263 / NCIMB 8327) (Chlorobium vibrioforme subsp. thiosulfatophilum).